A 172-amino-acid chain; its full sequence is Ribosome maturation factor RimM (172 aa).

In terms of domain architecture, PRC barrel spans 97–170 (DDEYYYDEII…LITIDVLEGL (74 aa)).

This sequence belongs to the RimM family. Binds ribosomal protein uS19.

The protein resides in the cytoplasm. Its function is as follows. An accessory protein needed during the final step in the assembly of 30S ribosomal subunit, possibly for assembly of the head region. Essential for efficient processing of 16S rRNA. May be needed both before and after RbfA during the maturation of 16S rRNA. It has affinity for free ribosomal 30S subunits but not for 70S ribosomes. The sequence is that of Ribosome maturation factor RimM from Leuconostoc citreum (strain KM20).